A 446-amino-acid chain; its full sequence is Probable carboxylesterase 16 (446 aa).

The segment at 84-131 (PEPDSLRHKDNYNHQPRSDRRHSYGPNHNSPAPAERNESRRNSYGCNN) is disordered. Residues 87–105 (DSLRHKDNYNHQPRSDRRH) are compositionally biased toward basic and acidic residues. Residues 158–160 (HGG) carry the Involved in the stabilization of the negatively charged intermediate by the formation of the oxyanion hole motif. Residues Ser274, Asp378, and His408 contribute to the active site.

This sequence belongs to the 'GDXG' lipolytic enzyme family. In terms of tissue distribution, expressed in roots, leaves, stems, flowers and siliques.

The catalysed reaction is a carboxylic ester + H2O = an alcohol + a carboxylate + H(+). Carboxylesterase acting on esters with varying acyl chain length. This chain is Probable carboxylesterase 16 (CXE16), found in Arabidopsis thaliana (Mouse-ear cress).